The chain runs to 850 residues: Mitochondrial escape protein 2 (850 aa).

The N-terminal 44 residues, 1 to 44 (MLLVRTTSLNVSRMPVPCLARGIGILKGKYRLANLMNAQPSVRH), are a transit peptide targeting the mitochondrion. The segment at 44–66 (HVSSEIQQKDQQAGESNTATDTG) is disordered. Residues 45–287 (VSSEIQQKDQ…VSNFFTNHTR (243 aa)) are Mitochondrial matrix-facing. The segment covering 47–64 (SEIQQKDQQAGESNTATD) has biased composition (polar residues). Residues 198–272 (TTIVIKFQGP…TVLHIQYENI (75 aa)) enclose the RRM domain. The helical transmembrane segment at 288–308 (IAIPVLFALLSIFAVLVFDPI) threads the bilayer. Residues 309–850 (REFSIEQKIT…CEEEIKNLSK (542 aa)) are Mitochondrial intermembrane-facing. The segment covering 607 to 621 (KGENVKEPESEKETA) has biased composition (basic and acidic residues). A disordered region spans residues 607–633 (KGENVKEPESEKETAENNDSDSEADTS).

The protein belongs to the YME2 family.

It localises to the mitochondrion inner membrane. Functionally, plays a role in maintaining the mitochondrial genome and in controlling the mtDNA escape. Involved in the regulation of mtDNA nucleotide structure and number. May have a dispensable role in early maturation of pre-rRNA. This chain is Mitochondrial escape protein 2 (YME2), found in Saccharomyces cerevisiae (strain ATCC 204508 / S288c) (Baker's yeast).